The primary structure comprises 375 residues: tRNA-specific 2-thiouridylase MnmA (375 aa).

ATP is bound by residues 12 to 19 (GMSGGVDS) and Met-38. Positions 98–100 (NPD) are interaction with target base in tRNA. Residue Cys-103 is the Nucleophile of the active site. Cys-103 and Cys-200 are joined by a disulfide. Gly-127 serves as a coordination point for ATP. The segment at 150 to 152 (KDQ) is interaction with tRNA. Residue Cys-200 is the Cysteine persulfide intermediate of the active site. The segment at 312–313 (RY) is interaction with tRNA.

This sequence belongs to the MnmA/TRMU family.

The protein resides in the cytoplasm. It carries out the reaction S-sulfanyl-L-cysteinyl-[protein] + uridine(34) in tRNA + AH2 + ATP = 2-thiouridine(34) in tRNA + L-cysteinyl-[protein] + A + AMP + diphosphate + H(+). Its function is as follows. Catalyzes the 2-thiolation of uridine at the wobble position (U34) of tRNA, leading to the formation of s(2)U34. The polypeptide is tRNA-specific 2-thiouridylase MnmA (Levilactobacillus brevis (strain ATCC 367 / BCRC 12310 / CIP 105137 / JCM 1170 / LMG 11437 / NCIMB 947 / NCTC 947) (Lactobacillus brevis)).